The following is a 397-amino-acid chain: UPF0597 protein Tmel_1007 (397 aa).

This sequence belongs to the UPF0597 family.

This chain is UPF0597 protein Tmel_1007, found in Thermosipho melanesiensis (strain DSM 12029 / CIP 104789 / BI429).